Here is a 1108-residue protein sequence, read N- to C-terminus: Mediator of RNA polymerase II transcription subunit 14 (1108 aa).

3 disordered regions span residues 1–30 (MAAV…GGDT), 35–54 (SSEI…DNPL), and 1048–1108 (QQQR…VDLT). Residues 35-52 (SSEIVQQQTPARSLQSDN) are compositionally biased toward polar residues. Residues 1048-1080 (QQQRQPVVQPGQQPQVQNQANGVMNRGPQRPGL) are compositionally biased toward low complexity.

Belongs to the Mediator complex subunit 14 family. In terms of assembly, component of the Mediator complex.

The protein resides in the nucleus. Component of the Mediator complex, a coactivator involved in the regulated transcription of nearly all RNA polymerase II-dependent genes. Mediator functions as a bridge to convey information from gene-specific regulatory proteins to the basal RNA polymerase II transcription machinery. Mediator is recruited to promoters by direct interactions with regulatory proteins and serves as a scaffold for the assembly of a functional preinitiation complex with RNA polymerase II and the general transcription factors. The polypeptide is Mediator of RNA polymerase II transcription subunit 14 (RGR1) (Pyricularia oryzae (strain 70-15 / ATCC MYA-4617 / FGSC 8958) (Rice blast fungus)).